The chain runs to 444 residues: Phosphoglucosamine mutase (444 aa).

Catalysis depends on S102, which acts as the Phosphoserine intermediate. Positions 102, 241, 243, and 245 each coordinate Mg(2+). Phosphoserine is present on S102.

The protein belongs to the phosphohexose mutase family. The cofactor is Mg(2+). Activated by phosphorylation.

The catalysed reaction is alpha-D-glucosamine 1-phosphate = D-glucosamine 6-phosphate. Catalyzes the conversion of glucosamine-6-phosphate to glucosamine-1-phosphate. This is Phosphoglucosamine mutase from Acidovorax ebreus (strain TPSY) (Diaphorobacter sp. (strain TPSY)).